The primary structure comprises 316 residues: CD276 antigen (316 aa).

The N-terminal stretch at 1–28 (MLRGWGGPSVGVSMGTALGVLCLCLTGA) is a signal peptide. Residues 29–139 (VEVQVSEDPV…DSAAVSLQVA (111 aa)) form the Ig-like V-type domain. Residues 29-248 (VEVQVSEDPV…GQPMTFPPEA (220 aa)) lie on the Extracellular side of the membrane. 3 N-linked (GlcNAc...) asparagine glycosylation sites follow: asparagine 104, asparagine 189, and asparagine 215. Positions 145-238 (PSMTLEPNKD…QDAHGSVTIT (94 aa)) constitute an Ig-like C2-type domain. Cysteine 165 and cysteine 220 form a disulfide bridge. Residues 249 to 269 (LWVTVGLSVCLVILLVALAFV) traverse the membrane as a helical segment. Topologically, residues 270–316 (CWRKIKQSCEEENAGAEDQDGDGEGSKTALRPLKHSENKEDDGQEIA) are cytoplasmic. Acidic residues predominate over residues 281-292 (ENAGAEDQDGDG). The interval 281–316 (ENAGAEDQDGDGEGSKTALRPLKHSENKEDDGQEIA) is disordered.

This sequence belongs to the immunoglobulin superfamily. BTN/MOG family. Interacts with TREML2 and this interaction enhances T-cell activation.

Its subcellular location is the membrane. Its function is as follows. Modulates T-cell-mediated immune responses and the development of acute and chronic transplant rejection. May play a positive regulatory role in bone formation and has a dual role in the bone-immune interface. Induces antitumor immunity as it activates both acquired and innate immunity leading to natural killer cell and CD8 T-cell dependent killing of tumor cells. This chain is CD276 antigen (Cd276), found in Rattus norvegicus (Rat).